Here is a 162-residue protein sequence, read N- to C-terminus: Protein-export protein SecB (162 aa).

Belongs to the SecB family. As to quaternary structure, homotetramer, a dimer of dimers. One homotetramer interacts with 1 SecA dimer.

It localises to the cytoplasm. Functionally, one of the proteins required for the normal export of preproteins out of the cell cytoplasm. It is a molecular chaperone that binds to a subset of precursor proteins, maintaining them in a translocation-competent state. It also specifically binds to its receptor SecA. In Pseudoalteromonas translucida (strain TAC 125), this protein is Protein-export protein SecB.